The sequence spans 190 residues: Vacuolar protein sorting-associated protein 29 (190 aa).

The protein belongs to the VPS29 family. In terms of assembly, component of the retromer complex which consists of VPS29 (MAG1), VPS26 (VPS26A or VPS26B), VPS35 (VPS35A or VPS35B or VPS35C), VPS5/17 (SNX1 or SNX2A or SNX2B). Component of a retromer subcomplex consisting of VPS29 (MAG1), VPS26 (VPS26A or VPS26B), VPS35 (VPS35A or VPS35B or VPS35C).

The protein localises to the cytoplasm. It localises to the endosome membrane. It is found in the prevacuolar compartment membrane. The protein resides in the golgi apparatus. Its subcellular location is the trans-Golgi network membrane. The protein localises to the late endosome membrane. Functionally, plays a role in vesicular protein sorting. Component of the membrane-associated retromer complex which is essential in endosome-to-Golgi retrograde transport. Required for the auxin-carrier protein PIN2 sorting to the lytic vacuolar pathway and the PIN1 recycling to the plasma membrane, thus influencing auxin transport orientation. Also involved in the efficient sorting of seed storage proteins globulin 12S and albumin 2S. The VPS29-VPS26-VPS35 subcomplex may be involved in recycling of specific cargos from endosome to the plasma membrane. This chain is Vacuolar protein sorting-associated protein 29, found in Arabidopsis thaliana (Mouse-ear cress).